Reading from the N-terminus, the 449-residue chain is MFQTINEISIHPELYNQKKVLIQGWITNIRGNLKIIFVELNDGSSFKNLQCVLKKEFIDFDKIENLALGVAVEISGIFSNTPERQQFGEVLVETLEIKGNNYNTNFPIQNQEISLEVLRQMPHFRHRSRLFRVIMKLRSALFFEIHKFFRRQGFINFSAPILTSNDGEGAGEVFIVDDENKDFFNKKTTLGVTGQLHAEAYALGFKKVYTFAPTFRAERSNTRRHAAEFWMIEPEVAFFTLEQIIELAVKLLQKVIKSVIIRNKDEFIFLEKAGDKNLRKRLLQFCDSQVTQISYEKAIELLLEHQEKFEEKDLFFGCDLKTEHERFLTEEIFHMPVVIINYPKNLKAFYMHQNEDGQTVAAFDLLVPGIGELIGGSQREVRYEKLLARMNELNMNIEEFQWYLDLRKYGNPGSSGFGLGFERLLMYITGIENIRDVIPFPRTNKNILM.

It belongs to the class-II aminoacyl-tRNA synthetase family. In terms of assembly, homodimer.

It localises to the cytoplasm. The catalysed reaction is tRNA(Asn) + L-asparagine + ATP = L-asparaginyl-tRNA(Asn) + AMP + diphosphate + H(+). The polypeptide is Asparagine--tRNA ligase (Mesomycoplasma hyopneumoniae (strain 232) (Mycoplasma hyopneumoniae)).